A 313-amino-acid chain; its full sequence is Porphobilinogen deaminase (313 aa).

Cysteine 242 bears the S-(dipyrrolylmethanemethyl)cysteine mark.

It belongs to the HMBS family. As to quaternary structure, monomer. The cofactor is dipyrromethane.

The catalysed reaction is 4 porphobilinogen + H2O = hydroxymethylbilane + 4 NH4(+). It participates in porphyrin-containing compound metabolism; protoporphyrin-IX biosynthesis; coproporphyrinogen-III from 5-aminolevulinate: step 2/4. In terms of biological role, tetrapolymerization of the monopyrrole PBG into the hydroxymethylbilane pre-uroporphyrinogen in several discrete steps. This Pseudomonas putida (strain ATCC 700007 / DSM 6899 / JCM 31910 / BCRC 17059 / LMG 24140 / F1) protein is Porphobilinogen deaminase.